The chain runs to 334 residues: MMAFAPPKSIDGPKMQTKMSTWTPLNHQLLNDQVFEERRALLGKWFDKWTDSQRRRILTGLLERCSLSQQKFCCRKLQEKIPAEALDFTTKLPRVLSVYIFSFLDPRSLCRCAQVSWYWKSLAELDQLWMLKCLRFNWYISFSPTPFEQGVWKKHYIQMVRELHVTKPKTPPKDEFTTADVQPIPGNSPDEKQSPSLAFRSSSSLRKKNNPGEKELPPWRSSDKHPTDIIRFNYLDNCDPELFRLGRRKRSEVTPDFKRQLRDKKNKLQDRARLRKAQSLISLSSPPKVPVRLAWPLHLPVAPSDREAATEALLEHLQKHPGLQSPSPRLQSQS.

The F-box domain maps to 86-132; the sequence is LDFTTKLPRVLSVYIFSFLDPRSLCRCAQVSWYWKSLAELDQLWMLK. 2 disordered regions span residues 168–222 and 314–334; these read PKTP…WRSS and LEHL…QSQS. Residues 194 to 204 are compositionally biased toward low complexity; sequence SPSLAFRSSSS. Residues 210–222 show a composition bias toward basic and acidic residues; sequence NPGEKELPPWRSS. Positions 323–334 are enriched in low complexity; that stretch reads LQSPSPRLQSQS.

Part of a SCF (SKP1-cullin-F-box) protein ligase complex.

Its function is as follows. Probably recognizes and binds to some phosphorylated proteins and promotes their ubiquitination and degradation. This chain is F-box only protein 16 (Fbxo16), found in Mus musculus (Mouse).